Here is an 88-residue protein sequence, read N- to C-terminus: uncharacterized protein (88 aa).

The helical transmembrane segment at 34–54 threads the bilayer; the sequence is IIIAVILIFFLTIVGLFYLII.

The protein resides in the membrane. This is an uncharacterized protein from Ureaplasma parvum serovar 3 (strain ATCC 700970).